The sequence spans 151 residues: MHKIPKGTALAFDFGEARIGVAQGDAELGLSHPLATVTGGSNDEKFAAIAKLVQEWQPRYFVVGLPVHADGTEHEMTHLSRKFGRRLNGRFNLPVYWVDERLSSVCAESLLSEAQVLGKKRKSVLDQVAAQAILHGFLEGGPAECFNGREG.

It belongs to the YqgF nuclease family.

The protein localises to the cytoplasm. Could be a nuclease involved in processing of the 5'-end of pre-16S rRNA. The sequence is that of Putative pre-16S rRNA nuclease from Neisseria gonorrhoeae (strain ATCC 700825 / FA 1090).